A 37-amino-acid polypeptide reads, in one-letter code: Large ribosomal subunit protein bL36c (37 aa).

The protein belongs to the bacterial ribosomal protein bL36 family.

It localises to the plastid. It is found in the chloroplast. The chain is Large ribosomal subunit protein bL36c from Gracilaria tenuistipitata var. liui (Red alga).